We begin with the raw amino-acid sequence, 417 residues long: Phosphoglycerate kinase (417 aa).

(2R)-3-phosphoglycerate-binding residues include V23, D24, F25, N26, Q38, R39, S62, H63, G65, R66, L121, R122, H169, and R170. Position 213 (G213) interacts with ADP. G213 provides a ligand contact to CDP. AMP-binding residues include A214 and K215. A214 provides a ligand contact to ATP. A214 serves as a coordination point for Mg(2+). Position 218 (D218) interacts with CDP. D218 contacts Mg(2+). K219 serves as a coordination point for AMP. K219 is an ATP binding site. G237 lines the ADP pocket. G237 serves as a coordination point for CDP. AMP contacts are provided by G238 and G312. Positions 238 and 312 each coordinate ATP. CDP contacts are provided by G337 and F342. F342 serves as a coordination point for ADP. E343 serves as a coordination point for AMP. ATP is bound by residues E343, D374, and T375. D374 provides a ligand contact to Mg(2+).

The protein belongs to the phosphoglycerate kinase family. As to quaternary structure, monomer. It depends on Mg(2+) as a cofactor.

It localises to the cytoplasm. Its subcellular location is the secreted. It is found in the cell wall. The protein localises to the mitochondrion. The catalysed reaction is (2R)-3-phosphoglycerate + ATP = (2R)-3-phospho-glyceroyl phosphate + ADP. Its pathway is carbohydrate degradation; glycolysis; pyruvate from D-glyceraldehyde 3-phosphate: step 2/5. Catalyzes one of the two ATP producing reactions in the glycolytic pathway via the reversible conversion of 1,3-diphosphoglycerate to 3-phosphoglycerate. Both L- and D- forms of purine and pyrimidine nucleotides can be used as substrates, but the activity is much lower on pyrimidines. Negatively regulates the biosynthesis of acetyl-CoA from pyruvate in the mitochondrion. The sequence is that of Phosphoglycerate kinase (PGK1) from Candida albicans (strain SC5314 / ATCC MYA-2876) (Yeast).